A 135-amino-acid polypeptide reads, in one-letter code: Ribosome-binding factor A (135 aa).

The protein belongs to the RbfA family. Monomer. Binds 30S ribosomal subunits, but not 50S ribosomal subunits or 70S ribosomes.

It is found in the cytoplasm. Functionally, one of several proteins that assist in the late maturation steps of the functional core of the 30S ribosomal subunit. Associates with free 30S ribosomal subunits (but not with 30S subunits that are part of 70S ribosomes or polysomes). Required for efficient processing of 16S rRNA. May interact with the 5'-terminal helix region of 16S rRNA. This is Ribosome-binding factor A from Hyphomonas neptunium (strain ATCC 15444).